A 393-amino-acid chain; its full sequence is MMRITVLGATGSIGDSTLDVVRRHPDRYRVFALTANTQVDKLAALCRVFRPAMAVVGSATAAEVLRDQLGAEATGIDIRFGPEALEEAAAHPDCDAVMAAIVGAAGLRPTLAAVRAGKRVLLANKEALVMSGALFMDAVRQHGATVLPIDSEHNAIFQCLPQQRPSFGHGVARIVLTASGGPFRTRAVETLAEVTPDQACAHPNWVMGRKISVDSATMMNKGLEVIEAHWLFNVPVERLEVLIHPQSVIHSMVAYDDGSVLAQLGNPDMRTPIAYGLAYPERIEAGVPLLDLAATGTLAFEAPDLHRFPCLALAFDALRAGGTAPAVLNAANEVAVEAFLQRRIRFTEIAAVVGDTLARTAIGPADSLDTVFAADAQARRRAEHYIAASCLQS.

Threonine 10, glycine 11, serine 12, isoleucine 13, glutamine 38, and asparagine 124 together coordinate NADPH. Lysine 125 contributes to the 1-deoxy-D-xylulose 5-phosphate binding site. NADPH is bound at residue glutamate 126. Aspartate 150 lines the Mn(2+) pocket. Residues serine 151, glutamate 152, serine 179, and histidine 202 each coordinate 1-deoxy-D-xylulose 5-phosphate. Residue glutamate 152 participates in Mn(2+) binding. Residue glycine 208 participates in NADPH binding. 1-deoxy-D-xylulose 5-phosphate-binding residues include serine 215, asparagine 220, lysine 221, and glutamate 224. Glutamate 224 contacts Mn(2+).

This sequence belongs to the DXR family. The cofactor is Mg(2+). Mn(2+) is required as a cofactor.

The enzyme catalyses 2-C-methyl-D-erythritol 4-phosphate + NADP(+) = 1-deoxy-D-xylulose 5-phosphate + NADPH + H(+). Its pathway is isoprenoid biosynthesis; isopentenyl diphosphate biosynthesis via DXP pathway; isopentenyl diphosphate from 1-deoxy-D-xylulose 5-phosphate: step 1/6. In terms of biological role, catalyzes the NADPH-dependent rearrangement and reduction of 1-deoxy-D-xylulose-5-phosphate (DXP) to 2-C-methyl-D-erythritol 4-phosphate (MEP). This chain is 1-deoxy-D-xylulose 5-phosphate reductoisomerase, found in Ralstonia nicotianae (strain ATCC BAA-1114 / GMI1000) (Ralstonia solanacearum).